A 475-amino-acid chain; its full sequence is Ribulose bisphosphate carboxylase large chain (475 aa).

Residues 1 to 2 (MA) constitute a propeptide that is removed on maturation. Residue Pro-3 is modified to N-acetylproline. At Lys-14 the chain carries N6,N6,N6-trimethyllysine. 2 residues coordinate substrate: Asn-123 and Thr-173. The Proton acceptor role is filled by Lys-175. Lys-177 provides a ligand contact to substrate. Positions 201, 203, and 204 each coordinate Mg(2+). Lys-201 bears the N6-carboxylysine mark. His-294 serves as the catalytic Proton acceptor. Substrate is bound by residues Arg-295, His-327, and Ser-379.

It belongs to the RuBisCO large chain family. Type I subfamily. In terms of assembly, heterohexadecamer of 8 large chains and 8 small chains; disulfide-linked. The disulfide link is formed within the large subunit homodimers. It depends on Mg(2+) as a cofactor. In terms of processing, the disulfide bond which can form in the large chain dimeric partners within the hexadecamer appears to be associated with oxidative stress and protein turnover.

It localises to the plastid. It is found in the chloroplast. It carries out the reaction 2 (2R)-3-phosphoglycerate + 2 H(+) = D-ribulose 1,5-bisphosphate + CO2 + H2O. The enzyme catalyses D-ribulose 1,5-bisphosphate + O2 = 2-phosphoglycolate + (2R)-3-phosphoglycerate + 2 H(+). RuBisCO catalyzes two reactions: the carboxylation of D-ribulose 1,5-bisphosphate, the primary event in carbon dioxide fixation, as well as the oxidative fragmentation of the pentose substrate in the photorespiration process. Both reactions occur simultaneously and in competition at the same active site. This Tupiella akineta (Green alga) protein is Ribulose bisphosphate carboxylase large chain.